A 264-amino-acid polypeptide reads, in one-letter code: MRLIDSTAKISPLAVVEEGAQIGAHVEIGPFSVIGKNVKIGAKTIIHSHVVINGHTEIGEQNQIFQFASIGEINQDLKYQGEPTKVIIGNRNRIRESVTIHRGTVQGGGVTRIGNDNLFMINTHIAHDCSIGNRCIIANNGTLAGHVTLDDFVIVGGMSAIHQFVVIGSHVMLGGGSMVSQDVPPYVMAQGNHAQPFGVNLEGLKRRGFDKPAMHAIRNAYKLIYRSGKTIEEAIPEIEQFAVNEPAVQLFLDFFKRSTRGIIR.

This sequence belongs to the transferase hexapeptide repeat family. LpxA subfamily. In terms of assembly, homotrimer.

It localises to the cytoplasm. The catalysed reaction is a (3R)-hydroxyacyl-[ACP] + UDP-N-acetyl-alpha-D-glucosamine = a UDP-3-O-[(3R)-3-hydroxyacyl]-N-acetyl-alpha-D-glucosamine + holo-[ACP]. It participates in glycolipid biosynthesis; lipid IV(A) biosynthesis; lipid IV(A) from (3R)-3-hydroxytetradecanoyl-[acyl-carrier-protein] and UDP-N-acetyl-alpha-D-glucosamine: step 1/6. In terms of biological role, involved in the biosynthesis of lipid A, a phosphorylated glycolipid that anchors the lipopolysaccharide to the outer membrane of the cell. This chain is Acyl-[acyl-carrier-protein]--UDP-N-acetylglucosamine O-acyltransferase, found in Actinobacillus pleuropneumoniae serotype 7 (strain AP76).